The following is a 136-amino-acid chain: NADPH-dependent 7-cyano-7-deazaguanine reductase (136 aa).

The active-site Thioimide intermediate is Cys-50. The active-site Proton donor is the Asp-57. Substrate-binding positions include Tyr-72–Leu-74 and His-91–Glu-92.

It belongs to the GTP cyclohydrolase I family. QueF type 1 subfamily.

Its subcellular location is the cytoplasm. It catalyses the reaction 7-aminomethyl-7-carbaguanine + 2 NADP(+) = 7-cyano-7-deazaguanine + 2 NADPH + 3 H(+). It participates in tRNA modification; tRNA-queuosine biosynthesis. Catalyzes the NADPH-dependent reduction of 7-cyano-7-deazaguanine (preQ0) to 7-aminomethyl-7-deazaguanine (preQ1). This chain is NADPH-dependent 7-cyano-7-deazaguanine reductase, found in Prochlorococcus marinus (strain MIT 9301).